The following is a 34-amino-acid chain: Jingzhaotoxin F7-10.36 (34 aa).

Disulfide bonds link C2-C17, C9-C22, and C16-C29.

This sequence belongs to the neurotoxin 10 (Hwtx-1) family. 50 (Jztz-F7) subfamily. As to expression, expressed by the venom gland.

Its subcellular location is the secreted. In terms of biological role, probable ion channel inhibitor. This is Jingzhaotoxin F7-10.36 from Chilobrachys guangxiensis (Chinese earth tiger tarantula).